The following is a 143-amino-acid chain: Large ribosomal subunit protein uL11 (143 aa).

The protein belongs to the universal ribosomal protein uL11 family. As to quaternary structure, part of the ribosomal stalk of the 50S ribosomal subunit. Interacts with L10 and the large rRNA to form the base of the stalk. L10 forms an elongated spine to which L12 dimers bind in a sequential fashion forming a multimeric L10(L12)X complex. In terms of processing, one or more lysine residues are methylated.

In terms of biological role, forms part of the ribosomal stalk which helps the ribosome interact with GTP-bound translation factors. This is Large ribosomal subunit protein uL11 from Burkholderia multivorans (strain ATCC 17616 / 249).